The primary structure comprises 612 residues: Dihydroxy-acid dehydratase (612 aa).

Mg(2+) is bound at residue D81. Residue C122 participates in [2Fe-2S] cluster binding. Residues D123 and K124 each contribute to the Mg(2+) site. K124 is modified (N6-carboxylysine). C193 provides a ligand contact to [2Fe-2S] cluster. E489 provides a ligand contact to Mg(2+). S515 (proton acceptor) is an active-site residue.

This sequence belongs to the IlvD/Edd family. In terms of assembly, homodimer. [2Fe-2S] cluster is required as a cofactor. Requires Mg(2+) as cofactor.

It carries out the reaction (2R)-2,3-dihydroxy-3-methylbutanoate = 3-methyl-2-oxobutanoate + H2O. The enzyme catalyses (2R,3R)-2,3-dihydroxy-3-methylpentanoate = (S)-3-methyl-2-oxopentanoate + H2O. The protein operates within amino-acid biosynthesis; L-isoleucine biosynthesis; L-isoleucine from 2-oxobutanoate: step 3/4. It participates in amino-acid biosynthesis; L-valine biosynthesis; L-valine from pyruvate: step 3/4. Its function is as follows. Functions in the biosynthesis of branched-chain amino acids. Catalyzes the dehydration of (2R,3R)-2,3-dihydroxy-3-methylpentanoate (2,3-dihydroxy-3-methylvalerate) into 2-oxo-3-methylpentanoate (2-oxo-3-methylvalerate) and of (2R)-2,3-dihydroxy-3-methylbutanoate (2,3-dihydroxyisovalerate) into 2-oxo-3-methylbutanoate (2-oxoisovalerate), the penultimate precursor to L-isoleucine and L-valine, respectively. In Xanthomonas campestris pv. campestris (strain 8004), this protein is Dihydroxy-acid dehydratase.